The primary structure comprises 462 residues: HEPACAM family member 2 (462 aa).

A signal peptide spans 1-31 (MGQDAFMEPFGDTLGVFQCKIYLLLFGACSG). Asparagine 85, asparagine 129, and asparagine 165 each carry an N-linked (GlcNAc...) asparagine glycan. 2 Ig-like C2-type domains span residues 149-233 (PVVQ…SDII) and 235-331 (PIIY…THFT). Disulfide bonds link cysteine 170–cysteine 219 and cysteine 270–cysteine 315. Asparagine 320 carries an N-linked (GlcNAc...) asparagine glycan. Residues 352 to 372 (LASITGISLFLIISMCLLFLW) form a helical membrane-spanning segment. Topologically, residues 373–462 (KKYQPYKVIK…IPAQQQDHPE (90 aa)) are cytoplasmic.

Post-translationally, poly-ADP-ribosylated (PARsylated) by tankyrase TNKS during late G2 and prophase, leading to translocation to mitotic centrosomes. N-glycosylated. In terms of tissue distribution, widely expressed.

It localises to the golgi apparatus membrane. The protein resides in the cytoplasm. It is found in the cytoskeleton. Its subcellular location is the spindle. The protein localises to the microtubule organizing center. It localises to the centrosome. The protein resides in the midbody. In terms of biological role, required during prometaphase for centrosome maturation. Following poly-ADP-ribosylation (PARsylation) by TNKS, translocates from the Golgi apparatus to mitotic centrosomes and plays a key role in the formation of robust microtubules for prompt movement of chromosomes: anchors AKAP9/CG-NAP, a scaffold protein of the gamma-tubulin ring complex and promotes centrosome maturation. The protein is HEPACAM family member 2 (HEPACAM2) of Homo sapiens (Human).